A 104-amino-acid chain; its full sequence is MTNRLVLSGTVCRTPLRKVSPSGIPHCQFVLEHRSVQEEAGFHRQAWCQMPVIVSGHENQAITHSITVGSRITVQGFISCHKAKNGLSKMVLHAEQIELIDSGD.

The SSB domain occupies 1 to 101 (MTNRLVLSGT…LHAEQIELID (101 aa)).

This sequence belongs to the PriB family. In terms of assembly, homodimer. Interacts with PriA and DnaT. Component of the replication restart primosome. Primosome assembly occurs via a 'hand-off' mechanism. PriA binds to replication forks, subsequently PriB then DnaT bind; DnaT then displaces ssDNA to generate the helicase loading substrate.

Involved in the restart of stalled replication forks, which reloads the replicative helicase on sites other than the origin of replication; the PriA-PriB pathway is the major replication restart pathway. During primosome assembly it facilitates complex formation between PriA and DnaT on DNA; stabilizes PriA on DNA. Stimulates the DNA unwinding activity of PriA helicase. The protein is Replication restart protein PriB of Escherichia coli (strain ATCC 8739 / DSM 1576 / NBRC 3972 / NCIMB 8545 / WDCM 00012 / Crooks).